The primary structure comprises 349 residues: MDIKSALSRIVGQLDLTTEEMRDVMRQIMTGQCTEAQIGAFLMGMRMKSESIDEIVGAVSVMRELADKVELKSLDGVVDIVGTGGDGANIFNVSTASSFVLAAAGCTVAKHGNRAVSGKSGSADLLEAAGIYLNLTPTQVARCIDSLGIGFMFAQSHHSAMKHAAGPRRDLGLRTLFNMLGPLTNPAGVKHQVVGVFAQTLCRPLAEVLQRLGSKHVLVVHSKDGLDEFSLAAPTFVAELKNGEITEYWVEPEDLGMKSQSLHGLAVENPQASLELIRDALGRRKTENGQKAAEMIVLNAGAALYAADHAMTLAQGVELAHDVLHTGLAWEKLQELGAFTAVFKVENEA.

5-phospho-alpha-D-ribose 1-diphosphate-binding positions include G82, 85 to 86 (GD), 92 to 95 (NVST), 110 to 118 (KHGNRAVSG), and S122. Residue G82 participates in anthranilate binding. Position 94 (S94) interacts with Mg(2+). N113 serves as a coordination point for anthranilate. R168 is a binding site for anthranilate. Positions 227 and 228 each coordinate Mg(2+).

Belongs to the anthranilate phosphoribosyltransferase family. Homodimer. It depends on Mg(2+) as a cofactor.

The catalysed reaction is N-(5-phospho-beta-D-ribosyl)anthranilate + diphosphate = 5-phospho-alpha-D-ribose 1-diphosphate + anthranilate. Its pathway is amino-acid biosynthesis; L-tryptophan biosynthesis; L-tryptophan from chorismate: step 2/5. Catalyzes the transfer of the phosphoribosyl group of 5-phosphorylribose-1-pyrophosphate (PRPP) to anthranilate to yield N-(5'-phosphoribosyl)-anthranilate (PRA). In Pseudomonas putida (Arthrobacter siderocapsulatus), this protein is Anthranilate phosphoribosyltransferase.